Consider the following 142-residue polypeptide: Nucleoside diphosphate kinase (142 aa).

ATP is bound by residues K11, F59, R87, T93, R104, and N114. The Pros-phosphohistidine intermediate role is filled by H117.

It belongs to the NDK family. Homotetramer. It depends on Mg(2+) as a cofactor.

It localises to the cytoplasm. It catalyses the reaction a 2'-deoxyribonucleoside 5'-diphosphate + ATP = a 2'-deoxyribonucleoside 5'-triphosphate + ADP. The enzyme catalyses a ribonucleoside 5'-diphosphate + ATP = a ribonucleoside 5'-triphosphate + ADP. Its function is as follows. Major role in the synthesis of nucleoside triphosphates other than ATP. The ATP gamma phosphate is transferred to the NDP beta phosphate via a ping-pong mechanism, using a phosphorylated active-site intermediate. This chain is Nucleoside diphosphate kinase, found in Marinobacter nauticus (strain ATCC 700491 / DSM 11845 / VT8) (Marinobacter aquaeolei).